A 227-amino-acid chain; its full sequence is ATP-dependent dethiobiotin synthetase BioD (227 aa).

13–18 provides a ligand contact to ATP; the sequence is DIGKTY. Residue T17 coordinates Mg(2+). K38 is an active-site residue. Residue S42 coordinates substrate. Residues D55, 116-119, and 179-180 each bind ATP; these read EGSG and NN. Residues D55 and E116 each contribute to the Mg(2+) site.

Belongs to the dethiobiotin synthetase family. Homodimer. Requires Mg(2+) as cofactor.

It is found in the cytoplasm. The catalysed reaction is (7R,8S)-7,8-diammoniononanoate + CO2 + ATP = (4R,5S)-dethiobiotin + ADP + phosphate + 3 H(+). It functions in the pathway cofactor biosynthesis; biotin biosynthesis; biotin from 7,8-diaminononanoate: step 1/2. In terms of biological role, catalyzes a mechanistically unusual reaction, the ATP-dependent insertion of CO2 between the N7 and N8 nitrogen atoms of 7,8-diaminopelargonic acid (DAPA, also called 7,8-diammoniononanoate) to form a ureido ring. This chain is ATP-dependent dethiobiotin synthetase BioD, found in Clostridium botulinum (strain 657 / Type Ba4).